The chain runs to 392 residues: Galactokinase (392 aa).

Residues Arg37, Glu43, His44, and Asp46 each contribute to the alpha-D-galactose site. ATP-binding residues include Gly136, Gly138, Ser140, and Ser141. Position 186 (Asp186) interacts with alpha-D-galactose. Asp186 (proton acceptor) is an active-site residue. Ser230 carries the phosphoserine modification. Tyr236 is an alpha-D-galactose binding site.

It belongs to the GHMP kinase family. GalK subfamily. Homodimer.

The catalysed reaction is alpha-D-galactose + ATP = alpha-D-galactose 1-phosphate + ADP + H(+). It participates in carbohydrate metabolism; galactose metabolism. Functionally, catalyzes the transfer of a phosphate from ATP to alpha-D-galactose and participates in the first committed step in the catabolism of galactose. This is Galactokinase (GALK1) from Canis lupus familiaris (Dog).